We begin with the raw amino-acid sequence, 476 residues long: Cytosolic Fe-S cluster assembly factor narfl (476 aa).

[4Fe-4S] cluster contacts are provided by cysteine 24, cysteine 71, cysteine 74, cysteine 77, cysteine 190, cysteine 246, cysteine 395, and cysteine 399.

This sequence belongs to the NARF family. Component of the CIA complex.

Functionally, component of the cytosolic iron-sulfur protein assembly (CIA) complex, a multiprotein complex that mediates the incorporation of iron-sulfur cluster into extramitochondrial Fe/S proteins. The chain is Cytosolic Fe-S cluster assembly factor narfl (narfl) from Xenopus tropicalis (Western clawed frog).